The primary structure comprises 151 residues: Probable cGMP 3',5'-cyclic phosphodiesterase subunit delta (151 aa).

The protein belongs to the PDE6D/unc-119 family. Interacts with Pde6.

The protein localises to the nucleus. Its subcellular location is the cytoplasm. The protein is Probable cGMP 3',5'-cyclic phosphodiesterase subunit delta of Drosophila virilis (Fruit fly).